The sequence spans 695 residues: Amphiphysin (695 aa).

2 coiled-coil regions span residues Ala10–Glu83 and Asp144–Leu191. Residues Val24 to Asp240 form the BAR domain. Disordered regions lie at residues Thr244–Thr312 and Gly486–Gln617. Ser252 is modified (phosphoserine). The residue at position 260 (Thr260) is a Phosphothreonine. Residues Pro261–Thr274 are compositionally biased toward pro residues. Ser262, Ser268, Ser272, and Ser276 each carry phosphoserine. Position 280 is a phosphothreonine (Thr280). Phosphoserine is present on residues Ser506 and Ser638. An SH3 domain is found at Gly622–Asp695.

Heterodimer with BIN1. Binds SH3GLB1. Interacts with REPS1 and SGIP1. Binds AP2A2. Interacts with AP2B1. Interacts with DNM1 and SYNJ1. As to expression, neurons, certain endocrine cell types and spermatocytes.

Its subcellular location is the cytoplasmic vesicle. The protein resides in the secretory vesicle. The protein localises to the synaptic vesicle membrane. It localises to the cytoplasm. It is found in the cytoskeleton. Its function is as follows. May participate in mechanisms of regulated exocytosis in synapses and certain endocrine cell types. May control the properties of the membrane associated cytoskeleton. The polypeptide is Amphiphysin (AMPH) (Homo sapiens (Human)).